A 155-amino-acid polypeptide reads, in one-letter code: Large ribosomal subunit protein uL30 (155 aa).

Belongs to the universal ribosomal protein uL30 family. In terms of assembly, part of the 50S ribosomal subunit.

The polypeptide is Large ribosomal subunit protein uL30 (Nanoarchaeum equitans (strain Kin4-M)).